A 345-amino-acid chain; its full sequence is Dihydroorotate dehydrogenase (quinone) (345 aa).

Residues 65–69 (AGLDK) and Thr89 each bind FMN. Residue Lys69 coordinates substrate. Residue 114 to 118 (NRMGF) participates in substrate binding. FMN contacts are provided by Asn142 and Asn175. Asn175 is a substrate binding site. Catalysis depends on Ser178, which acts as the Nucleophile. Asn180 lines the substrate pocket. Residues Lys220 and Thr248 each contribute to the FMN site. 249–250 (NT) contributes to the substrate binding site. FMN is bound by residues Gly271, Gly300, and 321–322 (YT).

It belongs to the dihydroorotate dehydrogenase family. Type 2 subfamily. In terms of assembly, monomer. Requires FMN as cofactor.

Its subcellular location is the cell membrane. The enzyme catalyses (S)-dihydroorotate + a quinone = orotate + a quinol. It participates in pyrimidine metabolism; UMP biosynthesis via de novo pathway; orotate from (S)-dihydroorotate (quinone route): step 1/1. Functionally, catalyzes the conversion of dihydroorotate to orotate with quinone as electron acceptor. In Burkholderia ambifaria (strain ATCC BAA-244 / DSM 16087 / CCUG 44356 / LMG 19182 / AMMD) (Burkholderia cepacia (strain AMMD)), this protein is Dihydroorotate dehydrogenase (quinone).